The chain runs to 154 residues: Aspartate carbamoyltransferase regulatory chain (154 aa).

Zn(2+)-binding residues include Cys109, Cys114, Cys138, and Cys141.

Belongs to the PyrI family. As to quaternary structure, contains catalytic and regulatory chains. Zn(2+) is required as a cofactor.

Functionally, involved in allosteric regulation of aspartate carbamoyltransferase. The sequence is that of Aspartate carbamoyltransferase regulatory chain from Tolumonas auensis (strain DSM 9187 / NBRC 110442 / TA 4).